The chain runs to 299 residues: Glycine--tRNA ligase alpha subunit (299 aa).

This sequence belongs to the class-II aminoacyl-tRNA synthetase family. Tetramer of two alpha and two beta subunits.

It is found in the cytoplasm. It catalyses the reaction tRNA(Gly) + glycine + ATP = glycyl-tRNA(Gly) + AMP + diphosphate. The protein is Glycine--tRNA ligase alpha subunit of Laribacter hongkongensis (strain HLHK9).